A 636-amino-acid chain; its full sequence is MPIITLPDGTKKIFEQVVSVEQVAKSMGLVKAALAGEVDGELVSTSFLIKTDANLTIITANDDQGLEIIRHSTAHLLAQATQMLYPDAQVTIGPVIDNGFYYDFAYKNGFLEGDLIKIEKNMHKLVKQNLKIEKFEMSRDETLQFFKDKGEYYKVKIIESISTDQILSLYKQGDFIDLCRGPHVPSTAKLKNFKLMKLAGAYWRGDSSNEMLQRVYGTAWGNEQDLKVYLHKLEEVARRDHRKIGKTQDLFHIQEETPGMVFWHAKGWILYQLVEQYMRGIFRDNGYQEVHTPQLIDKSLWEKSGHWDKFGDVMFTTTSGDRDYAVKPMNCPAHIQIYNQGLKSYRNLPLRLAEFGSCHRNEPSGTLHGIMRVRNFVQDDGHIFCTPEQIQDEVSTFIDLTFNVYKYFGFEKINIKLSTRPKKRVGSDEVWDKSEIALVEALNAKNIVWELQEGEGAFYGPKIEFILKDCLDRQWQCGTLQVDFSMPKRLGAQFIDENSVKKTPVILHRAIMGSLERFLGILIEHYEGAYPCWLSPIQAVIINISEKHAKFIVDIVKKLKKQGLRVISDLRNEKVSFKIREHSLQRYPYILVVGDREMEKGQVSVRQRGGKDLGAMSVGTFIKKVNQETLLKNQIK.

In terms of domain architecture, TGS spans 1 to 59 (MPIITLPDGTKKIFEQVVSVEQVAKSMGLVKAALAGEVDGELVSTSFLIKTDANLTIIT). The tract at residues 240–531 (DHRKIGKTQD…LIEHYEGAYP (292 aa)) is catalytic. Residues Cys331, His382, and His508 each coordinate Zn(2+).

The protein belongs to the class-II aminoacyl-tRNA synthetase family. In terms of assembly, homodimer. The cofactor is Zn(2+).

The protein resides in the cytoplasm. It carries out the reaction tRNA(Thr) + L-threonine + ATP = L-threonyl-tRNA(Thr) + AMP + diphosphate + H(+). In terms of biological role, catalyzes the attachment of threonine to tRNA(Thr) in a two-step reaction: L-threonine is first activated by ATP to form Thr-AMP and then transferred to the acceptor end of tRNA(Thr). Also edits incorrectly charged L-seryl-tRNA(Thr). The chain is Threonine--tRNA ligase from Vesicomyosocius okutanii subsp. Calyptogena okutanii (strain HA).